Here is a 181-residue protein sequence, read N- to C-terminus: MGGFFSSIFSSLFGTREMRILILGLDGAGKTTILYRLQVGEVVTTIPTIGFNVETVTYKNLKFQVWDLGGQTSIRPYWRCYYSNTDAVIYVVDSCDRDRIGISKSELVAMLEEEELRKAILVVFANKQDMEQAMTSSEMANSLGLPALKDRKWQIFKTSATKGTGLDEAMEWLVETLKSRQ.

Gly2 carries the N-myristoyl glycine lipid modification. GTP-binding positions include 24–31, 45–48, Gly70, 126–129, and 160–161; these read GLDGAGKT, TIPT, NKQD, and AT. The Mg(2+) site is built by Thr31 and Thr48.

Belongs to the small GTPase superfamily. Arf family. The GTP-bound form interacts with GOLGA1. The GTP-bound form interacts with GOLGA4 and RGPD8. The GTP-bound form directly interacts with ARFIP2. Binds to SCOC, preferentially in its GTP-bound form. May interact with UNC119. Interacts with ARFIP1; this interaction directs ARFIP1 to the trans-Golgi membranes. Interacts with ARFGEF1 (via N-terminus). As to expression, detected in heart, liver, lung and liver (at protein level). Detected in fetal heart, lung, liver and kidney. Detected in adult heart, placenta, lung, liver, skeletal muscle, kidney and pancreas.

The protein localises to the golgi apparatus membrane. The protein resides in the golgi apparatus. Its subcellular location is the trans-Golgi network membrane. It is found in the membrane. GTP-binding protein that recruits several effectors, such as golgins, arfaptins and Arf-GEFs to the trans-Golgi network, and modulates their functions at the Golgi complex. Plays thereby a role in a wide range of fundamental cellular processes, including cell polarity, innate immunity, or protein secretion mediated by arfaptins, which were shown to play a role in maintaining insulin secretion from pancreatic beta cells. The sequence is that of ADP-ribosylation factor-like protein 1 (ARL1) from Homo sapiens (Human).